Here is a 118-residue protein sequence, read N- to C-terminus: Ig heavy chain V region AC38 205.12 (118 aa).

A v segment region spans residues 1-98 (EVQLQQSGPE…EDSAVYYCAR (98 aa)). A disulfide bridge links C22 with C96. Residues 99–104 (GYGYDP) are d segment. The tract at residues 105-118 (FDVWGTGTTVTVSS) is j segment.

The protein is Ig heavy chain V region AC38 205.12 of Mus musculus (Mouse).